Here is a 297-residue protein sequence, read N- to C-terminus: HTH-type transcriptional regulator ArgP (297 aa).

One can recognise an HTH lysR-type domain in the interval 4-60; sequence PDYRTLQALDAVIRERGFERAAQKLCITQSAVSQRIKQLENLFGQPLLVRTIPPRPT. A DNA-binding region (H-T-H motif) is located at residues 21-40; sequence FERAAQKLCITQSAVSQRIK.

This sequence belongs to the LysR transcriptional regulatory family. Homodimer.

Functionally, controls the transcription of genes involved in arginine and lysine metabolism. In Pectobacterium carotovorum subsp. carotovorum (strain PC1), this protein is HTH-type transcriptional regulator ArgP.